The following is a 369-amino-acid chain: Cobalt-precorrin-5B C(1)-methyltransferase (369 aa).

It belongs to the CbiD family.

It carries out the reaction Co-precorrin-5B + S-adenosyl-L-methionine = Co-precorrin-6A + S-adenosyl-L-homocysteine. It functions in the pathway cofactor biosynthesis; adenosylcobalamin biosynthesis; cob(II)yrinate a,c-diamide from sirohydrochlorin (anaerobic route): step 6/10. Its function is as follows. Catalyzes the methylation of C-1 in cobalt-precorrin-5B to form cobalt-precorrin-6A. The chain is Cobalt-precorrin-5B C(1)-methyltransferase from Brucella melitensis biotype 2 (strain ATCC 23457).